Reading from the N-terminus, the 439-residue chain is 26S rRNA (cytosine-C(5))-methyltransferase nsun-5 (439 aa).

S-adenosyl-L-methionine-binding residues include Asp-266, Asp-293, and Asp-313. Cys-366 functions as the Nucleophile in the catalytic mechanism.

The protein belongs to the class I-like SAM-binding methyltransferase superfamily. RsmB/NOP family.

It catalyses the reaction a cytidine in 26S rRNA + S-adenosyl-L-methionine = a 5-methylcytidine in 26S rRNA + S-adenosyl-L-homocysteine + H(+). In terms of biological role, S-adenosyl-L-methionine-dependent methyltransferase which methylates the carbon-5 position of cytosine 2381 to 5-methylcytosine (m5C2381) in 26S rRNA. Plays a role in the production of mature 5S, 5.8S, 18S and 26S rRNAs and promotes the processing of the internally transcribed spacer 2 (ITS2), which separates the 5.8S and 26S rRNAs on large pre-rRNA precursors. May play a role in the translation of leucine and proline codons. May play a role in maintaining ribosomal frameshifting in response to osmotic stress. Not required for global translation. The polypeptide is 26S rRNA (cytosine-C(5))-methyltransferase nsun-5 (Caenorhabditis elegans).